The primary structure comprises 64 residues: Large ribosomal subunit protein bL35 (64 aa).

This sequence belongs to the bacterial ribosomal protein bL35 family.

The polypeptide is Large ribosomal subunit protein bL35 (Aliivibrio fischeri (strain ATCC 700601 / ES114) (Vibrio fischeri)).